The following is a 306-amino-acid chain: Ornithine carbamoyltransferase (306 aa).

Carbamoyl phosphate contacts are provided by residues 54-57, glutamine 81, arginine 105, and 132-135; these read STRT and HPLQ. L-ornithine contacts are provided by residues asparagine 162, aspartate 226, and 230–231; that span reads SM. Residues 266–267 and arginine 294 contribute to the carbamoyl phosphate site; that span reads CL.

Belongs to the aspartate/ornithine carbamoyltransferase superfamily. OTCase family.

The protein resides in the cytoplasm. The catalysed reaction is carbamoyl phosphate + L-ornithine = L-citrulline + phosphate + H(+). Its pathway is amino-acid biosynthesis; L-arginine biosynthesis; L-arginine from L-ornithine and carbamoyl phosphate: step 1/3. Reversibly catalyzes the transfer of the carbamoyl group from carbamoyl phosphate (CP) to the N(epsilon) atom of ornithine (ORN) to produce L-citrulline. This is Ornithine carbamoyltransferase from Sulfolobus acidocaldarius (strain ATCC 33909 / DSM 639 / JCM 8929 / NBRC 15157 / NCIMB 11770).